Here is a 388-residue protein sequence, read N- to C-terminus: Succinate--CoA ligase [ADP-forming] subunit beta (388 aa).

In terms of domain architecture, ATP-grasp spans 9–245 (KELLASYGLP…KSQENERELK (237 aa)). ATP is bound by residues lysine 46, 53–55 (GRG), glutamate 100, tyrosine 103, and glutamate 108. Positions 200 and 214 each coordinate Mg(2+). Residues asparagine 265 and 322–324 (GIV) each bind substrate.

It belongs to the succinate/malate CoA ligase beta subunit family. In terms of assembly, heterotetramer of two alpha and two beta subunits. Mg(2+) serves as cofactor.

It carries out the reaction succinate + ATP + CoA = succinyl-CoA + ADP + phosphate. The enzyme catalyses GTP + succinate + CoA = succinyl-CoA + GDP + phosphate. It participates in carbohydrate metabolism; tricarboxylic acid cycle; succinate from succinyl-CoA (ligase route): step 1/1. Its function is as follows. Succinyl-CoA synthetase functions in the citric acid cycle (TCA), coupling the hydrolysis of succinyl-CoA to the synthesis of either ATP or GTP and thus represents the only step of substrate-level phosphorylation in the TCA. The beta subunit provides nucleotide specificity of the enzyme and binds the substrate succinate, while the binding sites for coenzyme A and phosphate are found in the alpha subunit. In Neisseria meningitidis serogroup A / serotype 4A (strain DSM 15465 / Z2491), this protein is Succinate--CoA ligase [ADP-forming] subunit beta.